The sequence spans 248 residues: ATP synthase subunit a, chloroplastic (248 aa).

5 helical membrane passes run 38-58 (QVLI…TIAV), 96-116 (VPFI…GALL), 135-155 (INTT…AGLA), 200-220 (LVVA…VMFL), and 221-241 (GLFT…AYIG).

It belongs to the ATPase A chain family. As to quaternary structure, F-type ATPases have 2 components, CF(1) - the catalytic core - and CF(0) - the membrane proton channel. CF(1) has five subunits: alpha(3), beta(3), gamma(1), delta(1), epsilon(1). CF(0) has four main subunits: a, b, b' and c.

It localises to the plastid. The protein localises to the chloroplast thylakoid membrane. Its function is as follows. Key component of the proton channel; it plays a direct role in the translocation of protons across the membrane. The protein is ATP synthase subunit a, chloroplastic of Pinus koraiensis (Korean pine).